Reading from the N-terminus, the 620-residue chain is Chaperone protein HscA homolog (620 aa).

The protein belongs to the heat shock protein 70 family.

Functionally, chaperone involved in the maturation of iron-sulfur cluster-containing proteins. Has a low intrinsic ATPase activity which is markedly stimulated by HscB. The polypeptide is Chaperone protein HscA homolog (Shewanella woodyi (strain ATCC 51908 / MS32)).